Here is a 660-residue protein sequence, read N- to C-terminus: V-type ATP synthase subunit I (660 aa).

7 helical membrane passes run 312–332 (FFAF…GLLF), 362–382 (ILGL…GMSF), 453–473 (FIDN…LSLG), 485–505 (IGWI…LGTV), 520–540 (GQIG…LAMI), 560–580 (VLSY…GATF), and 593–613 (SIVI…GGVI).

It belongs to the V-ATPase 116 kDa subunit family.

The protein localises to the cell membrane. Produces ATP from ADP in the presence of a proton gradient across the membrane. This is V-type ATP synthase subunit I (atpI) from Chlamydia pneumoniae (Chlamydophila pneumoniae).